A 196-amino-acid polypeptide reads, in one-letter code: Pyridoxal 5'-phosphate synthase subunit PdxT (196 aa).

46–48 (GES) contacts L-glutamine. The active-site Nucleophile is cysteine 78. L-glutamine contacts are provided by residues arginine 110 and 138–139 (IR). Catalysis depends on charge relay system residues histidine 174 and glutamate 176.

It belongs to the glutaminase PdxT/SNO family. In terms of assembly, in the presence of PdxS, forms a dodecamer of heterodimers. Only shows activity in the heterodimer.

It carries out the reaction aldehydo-D-ribose 5-phosphate + D-glyceraldehyde 3-phosphate + L-glutamine = pyridoxal 5'-phosphate + L-glutamate + phosphate + 3 H2O + H(+). The enzyme catalyses L-glutamine + H2O = L-glutamate + NH4(+). It functions in the pathway cofactor biosynthesis; pyridoxal 5'-phosphate biosynthesis. Functionally, catalyzes the hydrolysis of glutamine to glutamate and ammonia as part of the biosynthesis of pyridoxal 5'-phosphate. The resulting ammonia molecule is channeled to the active site of PdxS. The polypeptide is Pyridoxal 5'-phosphate synthase subunit PdxT (Deinococcus radiodurans (strain ATCC 13939 / DSM 20539 / JCM 16871 / CCUG 27074 / LMG 4051 / NBRC 15346 / NCIMB 9279 / VKM B-1422 / R1)).